The chain runs to 358 residues: Aminomethyltransferase (358 aa).

The protein belongs to the GcvT family. The glycine cleavage system is composed of four proteins: P, T, L and H.

The enzyme catalyses N(6)-[(R)-S(8)-aminomethyldihydrolipoyl]-L-lysyl-[protein] + (6S)-5,6,7,8-tetrahydrofolate = N(6)-[(R)-dihydrolipoyl]-L-lysyl-[protein] + (6R)-5,10-methylene-5,6,7,8-tetrahydrofolate + NH4(+). Its function is as follows. The glycine cleavage system catalyzes the degradation of glycine. This chain is Aminomethyltransferase, found in Francisella tularensis subsp. tularensis (strain FSC 198).